A 257-amino-acid polypeptide reads, in one-letter code: 5-oxoprolinase subunit A (257 aa).

Belongs to the LamB/PxpA family. As to quaternary structure, forms a complex composed of PxpA, PxpB and PxpC.

It catalyses the reaction 5-oxo-L-proline + ATP + 2 H2O = L-glutamate + ADP + phosphate + H(+). Its function is as follows. Catalyzes the cleavage of 5-oxoproline to form L-glutamate coupled to the hydrolysis of ATP to ADP and inorganic phosphate. The chain is 5-oxoprolinase subunit A from Natranaerobius thermophilus (strain ATCC BAA-1301 / DSM 18059 / JW/NM-WN-LF).